A 255-amino-acid polypeptide reads, in one-letter code: Formate hydrogenlyase subunit 7 (255 aa).

Residues Cys-45, Cys-51, Cys-115, and Cys-145 each contribute to the [4Fe-4S] cluster site.

The protein belongs to the complex I 20 kDa subunit family. As to quaternary structure, FHL comprises of a formate dehydrogenase, unidentified electron carriers and a hydrogenase (isoenzyme 3). In this non-energy conserving pathway molecular hydrogen and carbodioxide from formate are released. It depends on [4Fe-4S] cluster as a cofactor.

In Escherichia coli (strain K12), this protein is Formate hydrogenlyase subunit 7 (hycG).